Here is a 38-residue protein sequence, read N- to C-terminus: Large ribosomal subunit protein bL36 (38 aa).

This sequence belongs to the bacterial ribosomal protein bL36 family.

In Psychrobacter arcticus (strain DSM 17307 / VKM B-2377 / 273-4), this protein is Large ribosomal subunit protein bL36.